We begin with the raw amino-acid sequence, 651 residues long: Acetyl-coenzyme A synthetase (651 aa).

Residues 190-193 (RRGK) and T311 contribute to the CoA site. Residues 387–389 (GEP), 411–416 (DTWWQT), D508, and R523 each bind ATP. S531 serves as a coordination point for CoA. R534 is an ATP binding site. 3 residues coordinate Mg(2+): V545, H547, and V550. K617 is subject to N6-acetyllysine.

Belongs to the ATP-dependent AMP-binding enzyme family. The cofactor is Mg(2+). Acetylated. Deacetylation by the SIR2-homolog deacetylase activates the enzyme.

The catalysed reaction is acetate + ATP + CoA = acetyl-CoA + AMP + diphosphate. Functionally, catalyzes the conversion of acetate into acetyl-CoA (AcCoA), an essential intermediate at the junction of anabolic and catabolic pathways. AcsA undergoes a two-step reaction. In the first half reaction, AcsA combines acetate with ATP to form acetyl-adenylate (AcAMP) intermediate. In the second half reaction, it can then transfer the acetyl group from AcAMP to the sulfhydryl group of CoA, forming the product AcCoA. M.tuberculosis may use AcsA for both acetate and propionate assimilation. This is Acetyl-coenzyme A synthetase from Mycobacterium tuberculosis (strain CDC 1551 / Oshkosh).